A 445-amino-acid polypeptide reads, in one-letter code: ATP synthase subunit b-delta (445 aa).

Residues 1–168 (MSTFIGQLVG…PAAAEVERPV (168 aa)) form an ATP synthase subunit b region. The helical transmembrane segment at 4–24 (FIGQLVGFAAIVFLVWRYVVP) threads the bilayer. The tract at residues 169–445 (AAKMRSASRR…LTAAEAQLPD (277 aa)) is ATP synthase subunit delta.

The protein in the N-terminal section; belongs to the ATPase B chain family. It in the C-terminal section; belongs to the ATPase delta chain family. F-type ATPases have 2 components, F(1) - the catalytic core - and F(0) - the membrane proton channel. F(1) has five subunits: alpha(3), beta(3), gamma(1), delta(1), epsilon(1). F(0) has three main subunits: a(1), b(2) and c(10-14). The alpha and beta chains form an alternating ring which encloses part of the gamma chain. F(1) is attached to F(0) by a central stalk formed by the gamma and epsilon chains, while a peripheral stalk is formed by the delta and b chains.

Its subcellular location is the cell membrane. Functionally, f(1)F(0) ATP synthase produces ATP from ADP in the presence of a proton or sodium gradient. F-type ATPases consist of two structural domains, F(1) containing the extramembraneous catalytic core and F(0) containing the membrane proton channel, linked together by a central stalk and a peripheral stalk. During catalysis, ATP synthesis in the catalytic domain of F(1) is coupled via a rotary mechanism of the central stalk subunits to proton translocation. Its function is as follows. This fusion protein includes a component of the F(0) channel (subunit b) and of the F(1) subunit (subunit delta). Two copies of subunit b and one of delta together form the peripheral 'stator' stalk which links F(1) to F(0). This chain is ATP synthase subunit b-delta (atpFH), found in Mycobacterium ulcerans (strain Agy99).